The primary structure comprises 250 residues: ATP synthase subunit a (250 aa).

6 helical membrane-spanning segments follow: residues 26–46 (FTNA…FLYL), 84–104 (FFPM…LGMV), 114–134 (IIVT…YGFY), 143–163 (LFVP…IEII), 193–213 (FVAS…LPLI), and 216–236 (VALT…FAVL).

This sequence belongs to the ATPase A chain family. F-type ATPases have 2 components, CF(1) - the catalytic core - and CF(0) - the membrane proton channel. CF(1) has five subunits: alpha(3), beta(3), gamma(1), delta(1), epsilon(1). CF(0) has three main subunits: a(1), b(2) and c(9-12). The alpha and beta chains form an alternating ring which encloses part of the gamma chain. CF(1) is attached to CF(0) by a central stalk formed by the gamma and epsilon chains, while a peripheral stalk is formed by the delta and b chains.

The protein resides in the cell inner membrane. Key component of the proton channel; it plays a direct role in the translocation of protons across the membrane. This Rhizobium meliloti (strain 1021) (Ensifer meliloti) protein is ATP synthase subunit a.